The following is a 256-amino-acid chain: Imidazole glycerol phosphate synthase subunit HisF (256 aa).

Residues Asp-11 and Asp-130 contribute to the active site.

The protein belongs to the HisA/HisF family. As to quaternary structure, heterodimer of HisH and HisF.

It localises to the cytoplasm. The enzyme catalyses 5-[(5-phospho-1-deoxy-D-ribulos-1-ylimino)methylamino]-1-(5-phospho-beta-D-ribosyl)imidazole-4-carboxamide + L-glutamine = D-erythro-1-(imidazol-4-yl)glycerol 3-phosphate + 5-amino-1-(5-phospho-beta-D-ribosyl)imidazole-4-carboxamide + L-glutamate + H(+). Its pathway is amino-acid biosynthesis; L-histidine biosynthesis; L-histidine from 5-phospho-alpha-D-ribose 1-diphosphate: step 5/9. Functionally, IGPS catalyzes the conversion of PRFAR and glutamine to IGP, AICAR and glutamate. The HisF subunit catalyzes the cyclization activity that produces IGP and AICAR from PRFAR using the ammonia provided by the HisH subunit. This is Imidazole glycerol phosphate synthase subunit HisF from Prochlorococcus marinus (strain MIT 9301).